Reading from the N-terminus, the 296-residue chain is Bifunctional protein FolD (296 aa).

Residues 170-172 and Ser195 each bind NADP(+); that span reads GRS.

The protein belongs to the tetrahydrofolate dehydrogenase/cyclohydrolase family. In terms of assembly, homodimer.

It carries out the reaction (6R)-5,10-methylene-5,6,7,8-tetrahydrofolate + NADP(+) = (6R)-5,10-methenyltetrahydrofolate + NADPH. The enzyme catalyses (6R)-5,10-methenyltetrahydrofolate + H2O = (6R)-10-formyltetrahydrofolate + H(+). The protein operates within one-carbon metabolism; tetrahydrofolate interconversion. Catalyzes the oxidation of 5,10-methylenetetrahydrofolate to 5,10-methenyltetrahydrofolate and then the hydrolysis of 5,10-methenyltetrahydrofolate to 10-formyltetrahydrofolate. This Rhodospirillum rubrum (strain ATCC 11170 / ATH 1.1.1 / DSM 467 / LMG 4362 / NCIMB 8255 / S1) protein is Bifunctional protein FolD.